Consider the following 342-residue polypeptide: Holliday junction branch migration complex subunit RuvB (342 aa).

The tract at residues 1–181 (MEERFLTPKD…FGMVLELEFY (181 aa)) is large ATPase domain (RuvB-L). ATP contacts are provided by residues leucine 20, arginine 21, glycine 62, lysine 65, threonine 66, threonine 67, 128–130 (EDF), arginine 171, tyrosine 181, and arginine 218. Threonine 66 is a binding site for Mg(2+). The small ATPAse domain (RuvB-S) stretch occupies residues 182–252 (TPDELKQIIK…TVEDAMKIMG (71 aa)). A head domain (RuvB-H) region spans residues 255–342 (AEGLDDMDRK…IGPLWDSTGD (88 aa)). DNA contacts are provided by arginine 310 and arginine 315.

It belongs to the RuvB family. Homohexamer. Forms an RuvA(8)-RuvB(12)-Holliday junction (HJ) complex. HJ DNA is sandwiched between 2 RuvA tetramers; dsDNA enters through RuvA and exits via RuvB. An RuvB hexamer assembles on each DNA strand where it exits the tetramer. Each RuvB hexamer is contacted by two RuvA subunits (via domain III) on 2 adjacent RuvB subunits; this complex drives branch migration. In the full resolvosome a probable DNA-RuvA(4)-RuvB(12)-RuvC(2) complex forms which resolves the HJ.

The protein resides in the cytoplasm. It catalyses the reaction ATP + H2O = ADP + phosphate + H(+). Its function is as follows. The RuvA-RuvB-RuvC complex processes Holliday junction (HJ) DNA during genetic recombination and DNA repair, while the RuvA-RuvB complex plays an important role in the rescue of blocked DNA replication forks via replication fork reversal (RFR). RuvA specifically binds to HJ cruciform DNA, conferring on it an open structure. The RuvB hexamer acts as an ATP-dependent pump, pulling dsDNA into and through the RuvAB complex. RuvB forms 2 homohexamers on either side of HJ DNA bound by 1 or 2 RuvA tetramers; 4 subunits per hexamer contact DNA at a time. Coordinated motions by a converter formed by DNA-disengaged RuvB subunits stimulates ATP hydrolysis and nucleotide exchange. Immobilization of the converter enables RuvB to convert the ATP-contained energy into a lever motion, pulling 2 nucleotides of DNA out of the RuvA tetramer per ATP hydrolyzed, thus driving DNA branch migration. The RuvB motors rotate together with the DNA substrate, which together with the progressing nucleotide cycle form the mechanistic basis for DNA recombination by continuous HJ branch migration. Branch migration allows RuvC to scan DNA until it finds its consensus sequence, where it cleaves and resolves cruciform DNA. The protein is Holliday junction branch migration complex subunit RuvB of Kosmotoga olearia (strain ATCC BAA-1733 / DSM 21960 / TBF 19.5.1).